The following is a 428-amino-acid chain: 3-deoxy-D-manno-octulosonic acid transferase (428 aa).

Catalysis depends on glutamate 64, which acts as the Proton acceptor. Residues 274 to 275 (PR), 316 to 318 (LGE), and 342 to 345 (NLIE) each bind CMP.

Belongs to the glycosyltransferase group 1 family. Glycosyltransferase 30 subfamily.

The protein localises to the cell inner membrane. The catalysed reaction is lipid IVA (E. coli) + CMP-3-deoxy-beta-D-manno-octulosonate = alpha-Kdo-(2-&gt;6)-lipid IVA (E. coli) + CMP + H(+). It functions in the pathway bacterial outer membrane biogenesis; LPS core biosynthesis. Its function is as follows. Involved in lipopolysaccharide (LPS) biosynthesis. Catalyzes the transfer of a single 3-deoxy-D-manno-octulosonate (Kdo) residue from CMP-Kdo to lipid IV(A), the tetraacyldisaccharide-1,4'-bisphosphate precursor of lipid A. This is 3-deoxy-D-manno-octulosonic acid transferase (waaA) from Bordetella pertussis.